A 44-amino-acid polypeptide reads, in one-letter code: U17-ctenitoxin-Co1a (44 aa).

Cystine bridges form between C3–C20, C10–C26, C19–C40, and C28–C38.

In terms of tissue distribution, expressed by the venom gland.

The protein localises to the secreted. In terms of biological role, omega-agatoxins are antagonists of voltage-sensitive calcium channels (Cav). Toxic to mice by intracerebroventricular injection. The protein is U17-ctenitoxin-Co1a of Ctenus ornatus (Brazilian spider).